We begin with the raw amino-acid sequence, 226 residues long: V-type proton ATPase subunit E (226 aa).

Belongs to the V-ATPase E subunit family. As to quaternary structure, V-ATPase is a heteromultimeric enzyme made up of two complexes: the ATP-hydrolytic V1 complex and the proton translocation V0 complex. The V1 complex consists of three catalytic AB heterodimers that form a heterohexamer, three peripheral stalks each consisting of EG heterodimers, one central rotor including subunits D and F, and the regulatory subunits C and H. The proton translocation complex V0 consists of the proton transport subunit a, a ring of proteolipid subunits c9c'', rotary subunit d, subunits e and f, and the accessory subunits VhaAC45 and ATP6AP2.

In terms of biological role, subunit of the V1 complex of vacuolar(H+)-ATPase (V-ATPase), a multisubunit enzyme composed of a peripheral complex (V1) that hydrolyzes ATP and a membrane integral complex (V0) that translocates protons. V-ATPase is responsible for acidifying and maintaining the pH of intracellular compartments and in some cell types, is targeted to the plasma membrane, where it is responsible for acidifying the extracellular environment. This is V-type proton ATPase subunit E (VHA26) from Manduca sexta (Tobacco hawkmoth).